Reading from the N-terminus, the 432-residue chain is Adenylosuccinate synthetase 2 (432 aa).

GTP is bound by residues 13–19 and 41–43; these read GDEGKGK and GHT. D14 functions as the Proton acceptor in the catalytic mechanism. 2 residues coordinate Mg(2+): D14 and G41. IMP contacts are provided by residues 14–17, 39–42, T130, R144, Q225, T240, and R304; these read DEGK and NAGH. The active-site Proton donor is the H42. 300 to 306 contributes to the substrate binding site; sequence ATTGRSR. GTP-binding positions include R306, 332-334, and 415-417; these read KLD and STG.

It belongs to the adenylosuccinate synthetase family. In terms of assembly, homodimer. Mg(2+) serves as cofactor.

It localises to the cytoplasm. It catalyses the reaction IMP + L-aspartate + GTP = N(6)-(1,2-dicarboxyethyl)-AMP + GDP + phosphate + 2 H(+). It participates in purine metabolism; AMP biosynthesis via de novo pathway; AMP from IMP: step 1/2. Plays an important role in the de novo pathway of purine nucleotide biosynthesis. Catalyzes the first committed step in the biosynthesis of AMP from IMP. The protein is Adenylosuccinate synthetase 2 of Photorhabdus laumondii subsp. laumondii (strain DSM 15139 / CIP 105565 / TT01) (Photorhabdus luminescens subsp. laumondii).